The following is a 701-amino-acid chain: Glycine--tRNA ligase beta subunit (701 aa).

The protein belongs to the class-II aminoacyl-tRNA synthetase family. As to quaternary structure, tetramer of two alpha and two beta subunits.

It localises to the cytoplasm. The enzyme catalyses tRNA(Gly) + glycine + ATP = glycyl-tRNA(Gly) + AMP + diphosphate. This chain is Glycine--tRNA ligase beta subunit, found in Helicobacter pylori (strain G27).